The following is a 539-amino-acid chain: Lipid scramblase CLPTM1L (539 aa).

The Cytoplasmic portion of the chain corresponds to methionine 1–serine 10. Residues leucine 11 to valine 31 form a helical membrane-spanning segment. The Extracellular segment spans residues tyrosine 32–leucine 285. Residues asparagine 91 and asparagine 101 are each glycosylated (N-linked (GlcNAc...) asparagine). A helical transmembrane segment spans residues tyrosine 286–phenylalanine 306. Residues lysine 307–lysine 325 are Cytoplasmic-facing. A helical transmembrane segment spans residues alanine 326–leucine 342. Residues aspartate 343–lysine 403 are Extracellular-facing. A helical membrane pass occupies residues tyrosine 404–isoleucine 424. Over lysine 425–tryptophan 429 the chain is Cytoplasmic. Residues tyrosine 430 to leucine 450 traverse the membrane as a helical segment. The Extracellular segment spans residues proline 451 to aspartate 539.

This sequence belongs to the CLPTM1 family.

It localises to the endoplasmic reticulum membrane. It carries out the reaction a 6-(alpha-D-glucosaminyl)-1-(1,2-diacyl-sn-glycero-3-phospho)-1D-myo-inositol(in) = a 6-(alpha-D-glucosaminyl)-1-(1,2-diacyl-sn-glycero-3-phospho)-1D-myo-inositol(out). The catalysed reaction is 6-(alpha-D-glucosaminyl)-(1-octadecanoyl,2-(9Z)-octadecenoyl-sn-glycero-3-phospho)-1D-myo-inositol(in) = 6-(alpha-D-glucosaminyl)-(1-octadecanoyl,2-(9Z)-octadecenoyl-sn-glycero-3-phospho)-1D-myo-inositol(out). It catalyses the reaction a 1,2-diacyl-sn-glycero-3-phospho-(1D-myo-inositol)(in) = a 1,2-diacyl-sn-glycero-3-phospho-(1D-myo-inositol)(out). The enzyme catalyses a 1,2-diacyl-sn-glycero-3-phosphocholine(in) = a 1,2-diacyl-sn-glycero-3-phosphocholine(out). It carries out the reaction a 1,2-diacyl-sn-glycero-3-phosphoethanolamine(in) = a 1,2-diacyl-sn-glycero-3-phosphoethanolamine(out). Its function is as follows. Scramblase that mediates the translocation of glucosaminylphosphatidylinositol (alpha-D-GlcN-(1-6)-(1,2-diacyl-sn-glycero-3-phospho)-1D-myo-inositol, GlcN-PI) across the endoplasmic reticulum (ER) membrane, from the cytosolic leaflet to the luminal leaflet of the ER membrane, where it participates in the biosynthesis of glycosylphosphatidylinositol (GPI). GPI is a lipid glycoconjugate involved in post-translational modification of proteins. Can also translocate 1,2-diacyl-sn-glycero-3-phospho-(1D-myo-inositol) (phosphatidylinositol or PI), as well as several other phospholipids (1,2-diacyl-sn-glycero-3-phosphocholine, 1,2-diacyl-sn-glycero-3-phosphoethanolamine), and N-acetylglucosaminylphosphatidylinositol (GlcNAc-PI) in vitro. This Mus musculus (Mouse) protein is Lipid scramblase CLPTM1L (Clptm1l).